Consider the following 64-residue polypeptide: MPKLKTNRGAAKRFKVKASGRISRARSNHSHILTKKDPKRKRRLRELTEVHASDAPMVRRMVAK.

The disordered stretch occupies residues Met-1–Leu-44. Residues Ala-10 to Leu-44 are compositionally biased toward basic residues.

It belongs to the bacterial ribosomal protein bL35 family.

The polypeptide is Large ribosomal subunit protein bL35 (Halorhodospira halophila (strain DSM 244 / SL1) (Ectothiorhodospira halophila (strain DSM 244 / SL1))).